The primary structure comprises 716 residues: Phosphoribosylformylglycinamidine synthase subunit PurL (716 aa).

His-34 is a catalytic residue. Tyr-37 contacts ATP. Residue Glu-78 coordinates Mg(2+). Substrate-binding positions include 79–82 and Arg-101; that span reads SHNH. His-80 serves as the catalytic Proton acceptor. Mg(2+) is bound at residue Asp-102. Gln-226 contacts substrate. Asp-254 provides a ligand contact to Mg(2+). Residue 298-300 participates in substrate binding; sequence ESQ. Residues Asp-474 and Gly-511 each contribute to the ATP site. Position 512 (Asn-512) interacts with Mg(2+). Position 514 (Ser-514) interacts with substrate.

The protein belongs to the FGAMS family. As to quaternary structure, monomer. Part of the FGAM synthase complex composed of 1 PurL, 1 PurQ and 2 PurS subunits.

It is found in the cytoplasm. The catalysed reaction is N(2)-formyl-N(1)-(5-phospho-beta-D-ribosyl)glycinamide + L-glutamine + ATP + H2O = 2-formamido-N(1)-(5-O-phospho-beta-D-ribosyl)acetamidine + L-glutamate + ADP + phosphate + H(+). The protein operates within purine metabolism; IMP biosynthesis via de novo pathway; 5-amino-1-(5-phospho-D-ribosyl)imidazole from N(2)-formyl-N(1)-(5-phospho-D-ribosyl)glycinamide: step 1/2. Functionally, part of the phosphoribosylformylglycinamidine synthase complex involved in the purines biosynthetic pathway. Catalyzes the ATP-dependent conversion of formylglycinamide ribonucleotide (FGAR) and glutamine to yield formylglycinamidine ribonucleotide (FGAM) and glutamate. The FGAM synthase complex is composed of three subunits. PurQ produces an ammonia molecule by converting glutamine to glutamate. PurL transfers the ammonia molecule to FGAR to form FGAM in an ATP-dependent manner. PurS interacts with PurQ and PurL and is thought to assist in the transfer of the ammonia molecule from PurQ to PurL. The chain is Phosphoribosylformylglycinamidine synthase subunit PurL from Methanobrevibacter smithii (strain ATCC 35061 / DSM 861 / OCM 144 / PS).